The primary structure comprises 343 residues: Transmembrane protein 120A (343 aa).

The Cytoplasmic segment spans residues 1–132 (MHPPPPGPLG…KQAKFAYKDE (132 aa)). Lys130 provides a ligand contact to CoA. Residues 133–152 (YEKFKLYLTIILILISFTCR) traverse the membrane as a helical segment. Topologically, residues 153–158 (FLLNSR) are extracellular. The chain crosses the membrane as a helical span at residues 159-177 (VTDAAFNFLLVWYYCTLTI). The Cytoplasmic portion of the chain corresponds to 178–190 (RESILINNGSRIK). The CoA site is built by Ser187 and Arg188. A helical transmembrane segment spans residues 191–209 (GWWVFHHYVSTFLSGVMLT). Residues 210-218 (WPDGLMYQK) are Extracellular-facing. Residues 219 to 240 (FRNQFLSFSMYQSFVQFLQYYY) traverse the membrane as a helical segment. CoA is bound by residues Gln237, Tyr240, Gln241, and His283. Over 241-270 (QSGCLYRLRALGERHTMDLTVEGFQSWMWR) the chain is Cytoplasmic. A helical membrane pass occupies residues 271–294 (GLTFLLPFLFFGHFWQLFNALTLF). Over 295–304 (NLARDPECKE) the chain is Extracellular. Residues 305-330 (WQVLMCGFPFLLLFLGNFFTTLRVVH) traverse the membrane as a helical segment. The Cytoplasmic portion of the chain corresponds to 331–343 (QKFHNQLHGSKKE). Lys332 is a binding site for CoA.

Belongs to the TMEM120 family. In terms of assembly, homodimer. Forms heterooligomer with TMEM120B. Interacts with PKD2; TMEM120A inhibits PKD2 channel activity through the physical association of PKD2 with TMEM120A.

The protein localises to the cell membrane. Its subcellular location is the nucleus inner membrane. It is found in the endoplasmic reticulum. Multifunctional protein involved in mechanosensation, and plays an essential role in lipid metabolism and adipocyte differentiation. May function as an ion channel involved in sensing mechanical stimuli. Mediates the mechanosensitivity of the PKD2-TMEM120A channel complex through direct physical interaction. TMEM120A seems to affect mechanosensation by inhibiting PIEZO2 channels, possibly by altering cellular lipid content. TMEM120A is structurally similar to a lipid-modifying enzyme, ELOVL7, and contains a bound coenzyme A molecule, which suggests it might function as an enzyme in lipid metabolism. Additionnaly, implicated in innate immune response against Zika virus. Acts as a key activator of the antiviral signaling involving STING1. The sequence is that of Transmembrane protein 120A from Bos taurus (Bovine).